Consider the following 286-residue polypeptide: Energy-coupling factor transporter ATP-binding protein EcfA2 (286 aa).

In terms of domain architecture, ABC transporter spans 3–246 (IRFDNVSYTY…KEKLADWHIA (244 aa)). 40–47 (GQTGSGKS) contacts ATP.

Belongs to the ABC transporter superfamily. Energy-coupling factor EcfA family. Forms a stable energy-coupling factor (ECF) transporter complex composed of 2 membrane-embedded substrate-binding proteins (S component), 2 ATP-binding proteins (A component) and 2 transmembrane proteins (T component).

It localises to the cell membrane. Its function is as follows. ATP-binding (A) component of a common energy-coupling factor (ECF) ABC-transporter complex. Unlike classic ABC transporters this ECF transporter provides the energy necessary to transport a number of different substrates. This Staphylococcus aureus (strain bovine RF122 / ET3-1) protein is Energy-coupling factor transporter ATP-binding protein EcfA2.